We begin with the raw amino-acid sequence, 320 residues long: Ubiquinone biosynthesis protein COQ4, mitochondrial (320 aa).

The transit peptide at Met1 to Thr31 directs the protein to the mitochondrion. Zn(2+) is bound by residues His205, Asp206, His209, and Glu221.

It belongs to the COQ4 family. As to quaternary structure, component of a multi-subunit COQ enzyme complex, composed of at least COQ3, COQ4, COQ5, COQ6, COQ7 and COQ9. The cofactor is Zn(2+).

The protein localises to the mitochondrion inner membrane. The enzyme catalyses a 4-hydroxy-3-methoxy-5-(all-trans-polyprenyl)benzoate + H(+) = a 2-methoxy-6-(all-trans-polyprenyl)phenol + CO2. It participates in cofactor biosynthesis; ubiquinone biosynthesis. Functionally, lyase that catalyzes the C1-decarboxylation of 4-hydroxy-3-methoxy-5-(all-trans-polyprenyl)benzoic acid into 2-methoxy-6-(all-trans-polyprenyl)phenol during ubiquinone biosynthesis. This Scheffersomyces stipitis (strain ATCC 58785 / CBS 6054 / NBRC 10063 / NRRL Y-11545) (Yeast) protein is Ubiquinone biosynthesis protein COQ4, mitochondrial.